Reading from the N-terminus, the 180-residue chain is NAD(P)H-quinone oxidoreductase subunit I, chloroplastic (180 aa).

2 4Fe-4S ferredoxin-type domains span residues 55 to 84 (GRIH…VDWR) and 95 to 124 (LNYS…MTEE). Residues Cys64, Cys67, Cys70, Cys74, Cys104, Cys107, Cys110, and Cys114 each contribute to the [4Fe-4S] cluster site.

Belongs to the complex I 23 kDa subunit family. NDH is composed of at least 16 different subunits, 5 of which are encoded in the nucleus. [4Fe-4S] cluster serves as cofactor.

It is found in the plastid. It localises to the chloroplast thylakoid membrane. It catalyses the reaction a plastoquinone + NADH + (n+1) H(+)(in) = a plastoquinol + NAD(+) + n H(+)(out). The enzyme catalyses a plastoquinone + NADPH + (n+1) H(+)(in) = a plastoquinol + NADP(+) + n H(+)(out). NDH shuttles electrons from NAD(P)H:plastoquinone, via FMN and iron-sulfur (Fe-S) centers, to quinones in the photosynthetic chain and possibly in a chloroplast respiratory chain. The immediate electron acceptor for the enzyme in this species is believed to be plastoquinone. Couples the redox reaction to proton translocation, and thus conserves the redox energy in a proton gradient. In Oryza nivara (Indian wild rice), this protein is NAD(P)H-quinone oxidoreductase subunit I, chloroplastic.